Here is a 507-residue protein sequence, read N- to C-terminus: Serine/threonine-protein kinase CBK1 (507 aa).

The disordered stretch occupies residues 1 to 30 (MQKVSGSGKKTTAFQQRKSDSVYNNNEMNK). One can recognise a Protein kinase domain in the interval 126 to 431 (FHTVKVIGKG…ANDIKLHPFF (306 aa)). Residues 132–140 (IGKGAFGEV) and Lys155 contribute to the ATP site. Asp249 (proton acceptor) is an active-site residue. Residues 432–505 (RGVNWDTIRE…KRFDMMTQKG (74 aa)) form the AGC-kinase C-terminal domain.

The protein belongs to the protein kinase superfamily. STE Ser/Thr protein kinase family. COT1 subfamily.

It carries out the reaction L-seryl-[protein] + ATP = O-phospho-L-seryl-[protein] + ADP + H(+). The enzyme catalyses L-threonyl-[protein] + ATP = O-phospho-L-threonyl-[protein] + ADP + H(+). In terms of biological role, protein kinase that seems to play a role in signaling pathways necessary for cell growth and mating. The polypeptide is Serine/threonine-protein kinase CBK1 (CBK1) (Pneumocystis carinii).